The chain runs to 123 residues: Alpha-lactalbumin (123 aa).

The 123-residue stretch at 1-123 (KQFTKCELSQ…KLEQWLCEEL (123 aa)) folds into the C-type lysozyme domain. 4 disulfides stabilise this stretch: C6-C120, C28-C111, C61-C77, and C73-C91. Residues K79, D82, D84, D87, and D88 each contribute to the Ca(2+) site.

It belongs to the glycosyl hydrolase 22 family. In terms of assembly, lactose synthase (LS) is a heterodimer of a catalytic component, beta1,4-galactosyltransferase (beta4Gal-T1) and a regulatory component, alpha-lactalbumin (LA). As to expression, mammary gland specific. Secreted in milk.

The protein resides in the secreted. In terms of biological role, regulatory subunit of lactose synthase, changes the substrate specificity of galactosyltransferase in the mammary gland making glucose a good acceptor substrate for this enzyme. This enables LS to synthesize lactose, the major carbohydrate component of milk. In other tissues, galactosyltransferase transfers galactose onto the N-acetylglucosamine of the oligosaccharide chains in glycoproteins. The polypeptide is Alpha-lactalbumin (LALBA) (Equus asinus (Donkey)).